Reading from the N-terminus, the 196-residue chain is 7-methyl-GTP pyrophosphatase (196 aa).

Asp72 (proton acceptor) is an active-site residue.

The protein belongs to the Maf family. YceF subfamily. Requires a divalent metal cation as cofactor.

It is found in the cytoplasm. It carries out the reaction N(7)-methyl-GTP + H2O = N(7)-methyl-GMP + diphosphate + H(+). Functionally, nucleoside triphosphate pyrophosphatase that hydrolyzes 7-methyl-GTP (m(7)GTP). May have a dual role in cell division arrest and in preventing the incorporation of modified nucleotides into cellular nucleic acids. This chain is 7-methyl-GTP pyrophosphatase, found in Neisseria gonorrhoeae (strain ATCC 700825 / FA 1090).